We begin with the raw amino-acid sequence, 893 residues long: Beta-adaptin-like protein C (893 aa).

Residues threonine 593 to serine 621 are disordered.

This sequence belongs to the adaptor complexes large subunit family. In terms of assembly, adaptor protein complexes are heterotetramers composed of two large adaptins (beta-type subunit and alpha-type or delta-type or epsilon-type or gamma-type subunit), a medium adaptin (mu-type subunit) and a small adaptin (sigma-type subunit).

The protein localises to the golgi apparatus. It localises to the trans-Golgi network. Its subcellular location is the cytoplasmic vesicle. The protein resides in the clathrin-coated vesicle membrane. In terms of biological role, subunit of clathrin-associated adaptor protein complex that plays a role in protein sorting in the late-Golgi/trans-Golgi network (TGN) and/or endosomes. The AP complexes mediate both the recruitment of clathrin to membranes and the recognition of sorting signals within the cytosolic tails of transmembrane cargo molecules. The sequence is that of Beta-adaptin-like protein C (BETAC-AD) from Arabidopsis thaliana (Mouse-ear cress).